A 90-amino-acid chain; its full sequence is Acylphosphatase (90 aa).

In terms of domain architecture, Acylphosphatase-like spans cysteine 4–tyrosine 90. Catalysis depends on residues arginine 19 and asparagine 37.

Belongs to the acylphosphatase family.

It carries out the reaction an acyl phosphate + H2O = a carboxylate + phosphate + H(+). In Methanothrix thermoacetophila (strain DSM 6194 / JCM 14653 / NBRC 101360 / PT) (Methanosaeta thermophila), this protein is Acylphosphatase (acyP).